The primary structure comprises 156 residues: Transcriptional repressor NrdR (156 aa).

Residues 3–34 fold into a zinc finger; it reads CPKCNSTHSRVVDSRHADEVNAIRRRRECEEC. The region spanning 49 to 139 is the ATP-cone domain; sequence LIVVKKDGTR…VYKEFKDVDQ (91 aa).

The protein belongs to the NrdR family. Requires Zn(2+) as cofactor.

Its function is as follows. Negatively regulates transcription of bacterial ribonucleotide reductase nrd genes and operons by binding to NrdR-boxes. The polypeptide is Transcriptional repressor NrdR (Staphylococcus saprophyticus subsp. saprophyticus (strain ATCC 15305 / DSM 20229 / NCIMB 8711 / NCTC 7292 / S-41)).